The chain runs to 682 residues: tRNA(Met) cytidine acetyltransferase TmcA (682 aa).

ATP-binding positions include Q176, 198 to 207 (GRGKSTLAGM), and R320. The N-acetyltransferase domain occupies 357–534 (QQQWIQQPEL…SGCYTAMAIF (178 aa)). Acetyl-CoA-binding positions include 462–464 (VAV) and E502.

This sequence belongs to the RNA cytidine acetyltransferase family. TmcA subfamily.

It localises to the cytoplasm. The enzyme catalyses cytidine(34) in elongator tRNA(Met) + acetyl-CoA + ATP + H2O = N(4)-acetylcytidine(34) in elongator tRNA(Met) + ADP + phosphate + CoA + H(+). In terms of biological role, catalyzes the formation of N(4)-acetylcytidine (ac(4)C) at the wobble position of tRNA(Met), by using acetyl-CoA as an acetyl donor and ATP (or GTP). The sequence is that of tRNA(Met) cytidine acetyltransferase TmcA from Photorhabdus asymbiotica subsp. asymbiotica (strain ATCC 43949 / 3105-77) (Xenorhabdus luminescens (strain 2)).